A 484-amino-acid chain; its full sequence is Rho guanine nucleotide exchange factor 35 (484 aa).

The disordered stretch occupies residues 139 to 418 (FSSDLGSEEE…ALIAPEDSPH (280 aa)). Ser184 is modified (phosphoserine). Residues 217–237 (ESQGLLHPQEVQVLEEQGQQE) show a composition bias toward low complexity. The segment covering 266 to 278 (NDEKGEQKQKQEQ) has biased composition (basic and acidic residues). A compositionally biased stretch (acidic residues) spans 299 to 309 (GLNDGEWEQED). 2 stretches are compositionally biased toward basic and acidic residues: residues 323–368 (GEER…KEKG) and 394–404 (RSREEENEHHG).

This chain is Rho guanine nucleotide exchange factor 35 (ARHGEF35), found in Homo sapiens (Human).